Here is a 411-residue protein sequence, read N- to C-terminus: Na(+)-translocating NADH-quinone reductase subunit B (411 aa).

3 helical membrane-spanning segments follow: residues 56-76 (MMIT…YNVG), 120-140 (ALGA…CTIW), and 166-186 (IVPP…GIIV). Threonine 233 is modified (FMN phosphoryl threonine). The next 5 membrane-spanning stretches (helical) occupy residues 272 to 292 (VSTL…IAAW), 294 to 314 (IIAG…LIGS), 319 to 339 (MFSM…GMVF), 348 to 368 (SFTN…AVLI), and 378 to 398 (GMML…YIVV).

It belongs to the NqrB/RnfD family. In terms of assembly, composed of six subunits; NqrA, NqrB, NqrC, NqrD, NqrE and NqrF. The cofactor is FMN.

Its subcellular location is the cell inner membrane. It carries out the reaction a ubiquinone + n Na(+)(in) + NADH + H(+) = a ubiquinol + n Na(+)(out) + NAD(+). Functionally, NQR complex catalyzes the reduction of ubiquinone-1 to ubiquinol by two successive reactions, coupled with the transport of Na(+) ions from the cytoplasm to the periplasm. NqrA to NqrE are probably involved in the second step, the conversion of ubisemiquinone to ubiquinol. This chain is Na(+)-translocating NADH-quinone reductase subunit B, found in Haemophilus influenzae (strain 86-028NP).